The sequence spans 377 residues: Nitric oxide reductase FlRd-NAD(+) reductase (377 aa).

Belongs to the FAD-dependent oxidoreductase family. Requires FAD as cofactor.

The protein resides in the cytoplasm. It carries out the reaction 2 reduced [nitric oxide reductase rubredoxin domain] + NAD(+) + H(+) = 2 oxidized [nitric oxide reductase rubredoxin domain] + NADH. The protein operates within nitrogen metabolism; nitric oxide reduction. Functionally, one of at least two accessory proteins for anaerobic nitric oxide (NO) reductase. Reduces the rubredoxin moiety of NO reductase. The chain is Nitric oxide reductase FlRd-NAD(+) reductase from Klebsiella pneumoniae (strain 342).